The chain runs to 76 residues: Large ribosomal subunit protein uL29 (76 aa).

It belongs to the universal ribosomal protein uL29 family.

The polypeptide is Large ribosomal subunit protein uL29 (Corynebacterium aurimucosum (strain ATCC 700975 / DSM 44827 / CIP 107346 / CN-1) (Corynebacterium nigricans)).